A 745-amino-acid polypeptide reads, in one-letter code: uncharacterized protein (745 aa).

An HTH araC/xylS-type domain is found at 158-256 (NQVCDYIELH…HQTPKQYRGD (99 aa)). 2 consecutive DNA-binding regions (H-T-H motif) follow at residues 175–196 (SELSEYVGWSESHLSKKFAESL) and 223–246 (ITDIALQNGFSSAASFARTFKHIT).

This is an uncharacterized protein from Staphylococcus aureus.